Reading from the N-terminus, the 276-residue chain is 2-dehydro-3-deoxyphosphooctonate aldolase (276 aa).

Belongs to the KdsA family.

It localises to the cytoplasm. The enzyme catalyses D-arabinose 5-phosphate + phosphoenolpyruvate + H2O = 3-deoxy-alpha-D-manno-2-octulosonate-8-phosphate + phosphate. Its pathway is carbohydrate biosynthesis; 3-deoxy-D-manno-octulosonate biosynthesis; 3-deoxy-D-manno-octulosonate from D-ribulose 5-phosphate: step 2/3. In Stenotrophomonas maltophilia (strain K279a), this protein is 2-dehydro-3-deoxyphosphooctonate aldolase.